The chain runs to 476 residues: ATP synthase subunit beta (476 aa).

157–164 (GGAGVGKT) is a binding site for ATP.

Belongs to the ATPase alpha/beta chains family. In terms of assembly, F-type ATPases have 2 components, CF(1) - the catalytic core - and CF(0) - the membrane proton channel. CF(1) has five subunits: alpha(3), beta(3), gamma(1), delta(1), epsilon(1). CF(0) has three main subunits: a(1), b(2) and c(9-12). The alpha and beta chains form an alternating ring which encloses part of the gamma chain. CF(1) is attached to CF(0) by a central stalk formed by the gamma and epsilon chains, while a peripheral stalk is formed by the delta and b chains.

It is found in the cell membrane. The catalysed reaction is ATP + H2O + 4 H(+)(in) = ADP + phosphate + 5 H(+)(out). In terms of biological role, produces ATP from ADP in the presence of a proton gradient across the membrane. The catalytic sites are hosted primarily by the beta subunits. The sequence is that of ATP synthase subunit beta from Mycoplasma genitalium (strain ATCC 33530 / DSM 19775 / NCTC 10195 / G37) (Mycoplasmoides genitalium).